Consider the following 95-residue polypeptide: Integration host factor subunit beta (95 aa).

The protein belongs to the bacterial histone-like protein family. Heterodimer of an alpha and a beta chain.

In terms of biological role, this protein is one of the two subunits of integration host factor, a specific DNA-binding protein that functions in genetic recombination as well as in transcriptional and translational control. This is Integration host factor subunit beta from Jannaschia sp. (strain CCS1).